Here is a 251-residue protein sequence, read N- to C-terminus: Ubiquinone/menaquinone biosynthesis C-methyltransferase UbiE (251 aa).

Residues Thr-74, Asp-95, 123-124 (NA), and Ser-140 each bind S-adenosyl-L-methionine.

The protein belongs to the class I-like SAM-binding methyltransferase superfamily. MenG/UbiE family.

It catalyses the reaction a 2-demethylmenaquinol + S-adenosyl-L-methionine = a menaquinol + S-adenosyl-L-homocysteine + H(+). It carries out the reaction a 2-methoxy-6-(all-trans-polyprenyl)benzene-1,4-diol + S-adenosyl-L-methionine = a 5-methoxy-2-methyl-3-(all-trans-polyprenyl)benzene-1,4-diol + S-adenosyl-L-homocysteine + H(+). The protein operates within quinol/quinone metabolism; menaquinone biosynthesis; menaquinol from 1,4-dihydroxy-2-naphthoate: step 2/2. Its pathway is cofactor biosynthesis; ubiquinone biosynthesis. Functionally, methyltransferase required for the conversion of demethylmenaquinol (DMKH2) to menaquinol (MKH2) and the conversion of 2-polyprenyl-6-methoxy-1,4-benzoquinol (DDMQH2) to 2-polyprenyl-3-methyl-6-methoxy-1,4-benzoquinol (DMQH2). The polypeptide is Ubiquinone/menaquinone biosynthesis C-methyltransferase UbiE (Citrobacter koseri (strain ATCC BAA-895 / CDC 4225-83 / SGSC4696)).